We begin with the raw amino-acid sequence, 468 residues long: Phosphatidylglycerol--prolipoprotein diacylglyceryl transferase (468 aa).

The next 3 membrane-spanning stretches (helical) occupy residues 21 to 41, 56 to 76, and 96 to 116; these read LPVRAYAVCVITGIIVALLIG, YDIALWAVPFGLIGGRLYHLA, and IWDGGLGIWGAVTLGVMGAWI. Arginine 144 contributes to the a 1,2-diacyl-sn-glycero-3-phospho-(1'-sn-glycerol) binding site. The next 3 membrane-spanning stretches (helical) occupy residues 192-212, 218-238, and 256-276; these read VVQPTFLYELIWNVLVFVALI, FIIGHGRLFGFYVAFYCAGRF, and INSFTSTFVFIGAVVYIILAP. Residues 349–468 are disordered; sequence VVQVADRDGE…RWWRLRRRRQ (120 aa). Over residues 391 to 406 the composition is skewed to low complexity; the sequence is AEAASAAPEEPAALAS. The span at 445–455 shows a compositional bias: basic and acidic residues; that stretch reads DGIRRQDDFSS. Basic residues predominate over residues 456–468; the sequence is RRRRWWRLRRRRQ.

It belongs to the Lgt family.

The protein localises to the cell membrane. The catalysed reaction is L-cysteinyl-[prolipoprotein] + a 1,2-diacyl-sn-glycero-3-phospho-(1'-sn-glycerol) = an S-1,2-diacyl-sn-glyceryl-L-cysteinyl-[prolipoprotein] + sn-glycerol 1-phosphate + H(+). It functions in the pathway protein modification; lipoprotein biosynthesis (diacylglyceryl transfer). Catalyzes the transfer of the diacylglyceryl group from phosphatidylglycerol to the sulfhydryl group of the N-terminal cysteine of a prolipoprotein, the first step in the formation of mature lipoproteins. This Mycobacterium bovis (strain ATCC BAA-935 / AF2122/97) protein is Phosphatidylglycerol--prolipoprotein diacylglyceryl transferase.